The chain runs to 163 residues: Endoribonuclease YbeY (163 aa).

Zn(2+) contacts are provided by His116, His120, and His126.

It belongs to the endoribonuclease YbeY family. Zn(2+) serves as cofactor.

The protein localises to the cytoplasm. Functionally, single strand-specific metallo-endoribonuclease involved in late-stage 70S ribosome quality control and in maturation of the 3' terminus of the 16S rRNA. This chain is Endoribonuclease YbeY, found in Idiomarina loihiensis (strain ATCC BAA-735 / DSM 15497 / L2-TR).